Consider the following 140-residue polypeptide: Putative pre-16S rRNA nuclease (140 aa).

The protein belongs to the YqgF nuclease family.

The protein resides in the cytoplasm. Functionally, could be a nuclease involved in processing of the 5'-end of pre-16S rRNA. The chain is Putative pre-16S rRNA nuclease from Aeromonas salmonicida (strain A449).